A 521-amino-acid polypeptide reads, in one-letter code: Protein PLM2 (521 aa).

The disordered stretch occupies residues 1 to 63; the sequence is MSHLFPPSSP…SIGRQSSPVK (63 aa). A compositionally biased stretch (polar residues) spans 51 to 63; that stretch reads PSSSIGRQSSPVK. Residues 102–156 enclose the FHA domain; it reads LAIGRKKSVCNIILPCRKNISRQHAFISYAADRNEIKLECNGTNGLSVHLPYSMQ. Phosphoserine is present on residues S281, S295, S302, and S384.

Belongs to the PLM2/TOS4 family. Post-translationally, phosphorylated by CDC28.

Its subcellular location is the nucleus. Functionally, binds to the promoters of genes with functions important for the G1/S (start) transition; primarily genes involved in DNA synthesis and repair, chromosome segregation, nuclear division and transcription. The chain is Protein PLM2 (PLM2) from Saccharomyces cerevisiae (strain ATCC 204508 / S288c) (Baker's yeast).